The sequence spans 1719 residues: Cilia- and flagella-associated protein 43 (1719 aa).

Positions 94–120 (VREEGAGGGADKPSGSGAVSGKQQSSG) are disordered. WD repeat units follow at residues 122–165 (SVVL…GRCR), 174–214 (SSTS…EKAV), 226–263 (PAGA…PLQL), 308–345 (TSGA…AAAI), 413–452 (CHVG…LLGR), and 513–552 (LHSA…GRVR). The interval 569–596 (TWPRSDGGSGAASGHAQAGPVSTTSAEG) is disordered. WD repeat units follow at residues 697–736 (AHAR…LAAQ) and 749–788 (ITAG…AVAN). Positions 1022-1045 (RAKQEAARKADEDAAKRSAKDNAG) are disordered. Residues 1073 to 1114 (PKPAWLVALGVEPDAVNPKLITEEQNRELKEWQAKEKSLQEE) form a WD 9 repeat. 3 disordered regions span residues 1220–1269 (MPGG…AAAA), 1277–1296 (ATAA…GAAG), and 1325–1372 (TLNP…AAAA). The segment covering 1221–1233 (PGGGAIGAAGGHQ) has biased composition (gly residues). Low complexity predominate over residues 1257-1269 (ASLAHSPSGAAAA). Low complexity predominate over residues 1344 to 1358 (SSALHPSHSHASVHG). Coiled coils occupy residues 1524–1609 (AAQW…RSAQ) and 1651–1679 (HKKL…RLRT). Residues 1685-1719 (ESGAVAGMPSPPRRLPPDIKLLAGSPSSSSVAGRT) form a disordered region. Residues 1709-1719 (SPSSSSVAGRT) show a composition bias toward polar residues.

This sequence belongs to the CFAP43 family.

It localises to the cell projection. It is found in the cilium. Its subcellular location is the flagellum. The protein localises to the cytoplasm. The protein resides in the cytoskeleton. It localises to the flagellum axoneme. Its function is as follows. Flagellar protein involved in flagellum axoneme organization and function. The chain is Cilia- and flagella-associated protein 43 from Chlamydomonas reinhardtii (Chlamydomonas smithii).